Reading from the N-terminus, the 238-residue chain is Ribosomal RNA small subunit methyltransferase G (238 aa).

Residues Gly77, Phe82, 128–129 (AE), and Arg147 each bind S-adenosyl-L-methionine. Positions 216-238 (RKERSTPKKYPRKPGTPNKQPLS) are disordered.

It belongs to the methyltransferase superfamily. RNA methyltransferase RsmG family.

It localises to the cytoplasm. In terms of biological role, specifically methylates the N7 position of guanine in position 535 of 16S rRNA. The sequence is that of Ribosomal RNA small subunit methyltransferase G from Halalkalibacterium halodurans (strain ATCC BAA-125 / DSM 18197 / FERM 7344 / JCM 9153 / C-125) (Bacillus halodurans).